We begin with the raw amino-acid sequence, 374 residues long: Glutamine synthetase (374 aa).

A required for glutamine-induced ubiquitination by CRL4(CRBN) and proteasomal degradation region spans residues 2 to 25 (TTSASSHLNKGIKQVYMSLPQGEK). N6-acetyllysine occurs at positions 11 and 14. The GS beta-grasp domain occupies 24–106 (EKVQAMYIWI…VLCESFQVQF (83 aa)). Positions 114–374 (LRHTCKRIMD…TGDEPFQYKN (261 aa)) constitute a GS catalytic domain. Glu-135 is a binding site for ATP. Mn(2+) contacts are provided by Glu-135, Glu-137, Glu-197, and Glu-204. 204-209 (EFQIGP) contacts ATP. 247–248 (NW) is an L-glutamate binding site. His-254 is a Mn(2+) binding site. ATP-binding positions include 256-258 (NFS), Arg-320, and Arg-325. Arg-320 is an L-glutamate binding site. Residue 337 to 339 (YFE) participates in ADP binding. Residue Glu-339 participates in Mn(2+) binding. Arg-341 serves as a coordination point for L-glutamate. Phosphoserine is present on Ser-344.

This sequence belongs to the glutamine synthetase family. As to quaternary structure, decamer; composed of two pentamers. Interacts with PALMD. Interacts with RHOJ. Interacts with BEST2; this interaction tethers a fraction of GLUL to the membrane, causing a decrease of cytosolic glutamine synthase (GS) activity and inhibits the chloride channel activity of BEST2 by affecting the gating at the aperture in the absence of intracellular glutamate. Mg(2+) serves as cofactor. The cofactor is Mn(2+). Post-translationally, palmitoylated; undergoes autopalmitoylation. In terms of processing, acetylated by EP300/p300; acetylation is stimulated by increased glutamine levels and promotes ubiquitin-mediated proteasomal degradation. Ubiquitinated by ZNRF1. Ubiquitinated by the DCX (DDB1-CUL4-X-box) E3 ubiquitin-protein ligase complex called CRL4(CRBN), leading to proteasomal degradation.

The protein resides in the cytoplasm. It localises to the cytosol. It is found in the microsome. The protein localises to the mitochondrion. Its subcellular location is the cell membrane. It catalyses the reaction L-glutamate + NH4(+) + ATP = L-glutamine + ADP + phosphate + H(+). The catalysed reaction is L-cysteinyl-[protein] + hexadecanoyl-CoA = S-hexadecanoyl-L-cysteinyl-[protein] + CoA. With respect to regulation, glutamine synthetase activity is inhibited by methionine sulfoximine (MSO). In terms of biological role, glutamine synthetase that catalyzes the ATP-dependent conversion of glutamate and ammonia to glutamine. Its role depends on tissue localization: in the brain, it regulates the levels of toxic ammonia and converts neurotoxic glutamate to harmless glutamine, whereas in the liver, it is one of the enzymes responsible for the removal of ammonia. Plays a key role in ammonium detoxification during erythropoiesis: the glutamine synthetase activity is required to remove ammonium generated by porphobilinogen deaminase (HMBS) during heme biosynthesis to prevent ammonium accumulation and oxidative stress. Essential for proliferation of fetal skin fibroblasts. Independently of its glutamine synthetase activity, required for endothelial cell migration during vascular development. Involved in angiogenesis by regulating membrane localization and activation of the GTPase RHOJ, possibly by promoting RHOJ palmitoylation. May act as a palmitoyltransferase for RHOJ: able to autopalmitoylate and then transfer the palmitoyl group to RHOJ. Plays a role in ribosomal 40S subunit biogenesis. Through the interaction with BEST2, inhibits BEST2 channel activity by affecting the gating at the aperture in the absence of intracellular L-glutamate, but sensitizes BEST2 to intracellular L-glutamate, which promotes the opening of BEST2 and thus relieves its inhibitory effect on BEST2. In Macaca fascicularis (Crab-eating macaque), this protein is Glutamine synthetase.